The sequence spans 361 residues: Phospho-N-acetylmuramoyl-pentapeptide-transferase (361 aa).

10 consecutive transmembrane segments (helical) span residues Leu-28–Leu-48, Thr-73–Leu-93, Met-98–Leu-118, Tyr-132–Pro-152, Trp-168–Ser-188, Gly-199–Ser-219, Gly-235–Trp-255, Val-263–Ile-283, Ile-288–Val-308, and Lys-338–Leu-358.

Belongs to the glycosyltransferase 4 family. MraY subfamily. The cofactor is Mg(2+).

The protein localises to the cell inner membrane. It catalyses the reaction UDP-N-acetyl-alpha-D-muramoyl-L-alanyl-gamma-D-glutamyl-meso-2,6-diaminopimeloyl-D-alanyl-D-alanine + di-trans,octa-cis-undecaprenyl phosphate = di-trans,octa-cis-undecaprenyl diphospho-N-acetyl-alpha-D-muramoyl-L-alanyl-D-glutamyl-meso-2,6-diaminopimeloyl-D-alanyl-D-alanine + UMP. It functions in the pathway cell wall biogenesis; peptidoglycan biosynthesis. Functionally, catalyzes the initial step of the lipid cycle reactions in the biosynthesis of the cell wall peptidoglycan: transfers peptidoglycan precursor phospho-MurNAc-pentapeptide from UDP-MurNAc-pentapeptide onto the lipid carrier undecaprenyl phosphate, yielding undecaprenyl-pyrophosphoryl-MurNAc-pentapeptide, known as lipid I. The chain is Phospho-N-acetylmuramoyl-pentapeptide-transferase from Thermodesulfovibrio yellowstonii (strain ATCC 51303 / DSM 11347 / YP87).